A 323-amino-acid polypeptide reads, in one-letter code: Sodium/potassium-transporting ATPase subunit beta-2 (323 aa).

At 1–50 (MPTITEDCIDGFQQYYSRPPERPKKKSLKQMVYDSEDNSYFGRSMDSWAK) the chain is on the cytoplasmic side. A helical; Signal-anchor for type II membrane protein transmembrane segment spans residues 51-71 (IGIFYVAFYGVLAALVAICMW). Over 72 to 323 (AFFQTLDPRI…GSVHYELLID (252 aa)) the chain is Extracellular. Disulfide bonds link C153–C165 and C175–C189. Residues N180 and N206 are each glycosylated (N-linked (GlcNAc...) asparagine). An intrachain disulfide couples C241 to C298.

The protein belongs to the X(+)/potassium ATPases subunit beta family. In terms of assembly, the sodium/potassium-transporting ATPase is composed of a catalytic alpha subunit, an auxiliary non-catalytic beta subunit and an additional regulatory subunit. In terms of tissue distribution, in embryos, it is expressed in the neurons of the CNS and PNS, in Garland cells and posterior spiracles. In adults, it shows a nervous system specific distribution: optic lobes, brain, thoracic ganglia and axonal pathways in the leg. Both isoforms concentrate in the adult head, isoform 2.2 being predominant. Both isoforms are weakly expressed in the thorax and very poorly expressed in the abdomen.

It is found in the cell membrane. Its function is as follows. This is the non-catalytic component of the active enzyme, which catalyzes the hydrolysis of ATP coupled with the exchange of Na(+) and K(+) ions across the plasma membrane. The beta subunit regulates, through assembly of alpha/beta heterodimers, the number of sodium pumps transported to the plasma membrane. This chain is Sodium/potassium-transporting ATPase subunit beta-2 (nrv2), found in Drosophila melanogaster (Fruit fly).